The sequence spans 466 residues: tRNA modification GTPase MnmE (466 aa).

Residues Arg22, Glu87, and Arg126 each coordinate (6S)-5-formyl-5,6,7,8-tetrahydrofolate. Residues 222-382 enclose the TrmE-type G domain; sequence GWRTVIVGRP…LTELIRRMVY (161 aa). Asn232 is a K(+) binding site. Residues 232–237, 251–257, and 276–279 contribute to the GTP site; these read NVGKSS, TEIPGTT, and DTAG. Residue Ser236 participates in Mg(2+) binding. 3 residues coordinate K(+): Thr251, Ile253, and Thr256. A Mg(2+)-binding site is contributed by Thr257. Lys466 is a (6S)-5-formyl-5,6,7,8-tetrahydrofolate binding site.

It belongs to the TRAFAC class TrmE-Era-EngA-EngB-Septin-like GTPase superfamily. TrmE GTPase family. In terms of assembly, homodimer. Heterotetramer of two MnmE and two MnmG subunits. The cofactor is K(+).

The protein resides in the cytoplasm. In terms of biological role, exhibits a very high intrinsic GTPase hydrolysis rate. Involved in the addition of a carboxymethylaminomethyl (cmnm) group at the wobble position (U34) of certain tRNAs, forming tRNA-cmnm(5)s(2)U34. This is tRNA modification GTPase MnmE from Heliobacterium modesticaldum (strain ATCC 51547 / Ice1).